Reading from the N-terminus, the 86-residue chain is YcgL domain-containing protein XAC4085 (86 aa).

Positions 1-83 (MHAYVYKSQR…PKTIVLAGEC (83 aa)) constitute a YcgL domain.

The sequence is that of YcgL domain-containing protein XAC4085 from Xanthomonas axonopodis pv. citri (strain 306).